The sequence spans 797 residues: LPS-assembly protein LptD (797 aa).

A signal peptide spans 1–20 (MHTIRCLILSALSVAGAAQA). Residues 23 to 45 (SQDAAPAGRQPVGSVASPGLEMP) form a disordered region.

The protein belongs to the LptD family. As to quaternary structure, component of the lipopolysaccharide transport and assembly complex. Interacts with LptE and LptA.

The protein resides in the cell outer membrane. Its function is as follows. Together with LptE, is involved in the assembly of lipopolysaccharide (LPS) at the surface of the outer membrane. The polypeptide is LPS-assembly protein LptD (Bordetella avium (strain 197N)).